A 693-amino-acid polypeptide reads, in one-letter code: ATP-dependent DNA helicase RecG (693 aa).

The tract at residues 48–146 (THLYPIGELL…GDLSTPELQE (99 aa)) is wedge domain. A Helicase ATP-binding domain is found at 283-448 (DMALDVPMMR…AYADLDTSVI (166 aa)). 296–303 (GDVGSGKT) provides a ligand contact to ATP. A DEAH box motif is present at residues 397 to 400 (DEQH). Residues 482–628 (EGRQAYWVCT…GFVIAQKDLE (147 aa)) enclose the Helicase C-terminal domain.

Belongs to the helicase family. RecG subfamily. In terms of assembly, monomer.

The enzyme catalyses Couples ATP hydrolysis with the unwinding of duplex DNA by translocating in the 3'-5' direction.. It carries out the reaction ATP + H2O = ADP + phosphate + H(+). In terms of biological role, plays a critical role in recombination and DNA repair. Helps process Holliday junction intermediates to mature products by catalyzing branch migration. Has replication fork regression activity, unwinds stalled or blocked replication forks to make a HJ that can be resolved. Has a DNA unwinding activity characteristic of a DNA helicase with 3'-5' polarity. Its function is as follows. Plays a role in recovery after DNA ADP-ribosylation. The chain is ATP-dependent DNA helicase RecG from Escherichia coli O127:H6 (strain E2348/69 / EPEC).